Consider the following 943-residue polypeptide: Leucine--tRNA ligase (943 aa).

The 'HIGH' region motif lies at 36–46 (PYPSGSMHVGH). Positions 623 to 627 (KMSSS) match the 'KMSKS' region motif. Positions 910 to 943 (ASEVVIHTDPEEAPGPEDRKAGARPLRPGIWLEE) are disordered. The span at 915–930 (IHTDPEEAPGPEDRKA) shows a compositional bias: basic and acidic residues.

The protein belongs to the class-I aminoacyl-tRNA synthetase family.

Its subcellular location is the cytoplasm. It catalyses the reaction tRNA(Leu) + L-leucine + ATP = L-leucyl-tRNA(Leu) + AMP + diphosphate. The sequence is that of Leucine--tRNA ligase from Methanopyrus kandleri (strain AV19 / DSM 6324 / JCM 9639 / NBRC 100938).